The chain runs to 154 residues: 6,7-dimethyl-8-ribityllumazine synthase (154 aa).

5-amino-6-(D-ribitylamino)uracil-binding positions include phenylalanine 24, 56–58 (SFE), and 80–82 (AVV). 85 to 86 (ET) contributes to the (2S)-2-hydroxy-3-oxobutyl phosphate binding site. Residue histidine 88 is the Proton donor of the active site. Residue phenylalanine 113 participates in 5-amino-6-(D-ribitylamino)uracil binding. Arginine 127 contacts (2S)-2-hydroxy-3-oxobutyl phosphate.

This sequence belongs to the DMRL synthase family.

The catalysed reaction is (2S)-2-hydroxy-3-oxobutyl phosphate + 5-amino-6-(D-ribitylamino)uracil = 6,7-dimethyl-8-(1-D-ribityl)lumazine + phosphate + 2 H2O + H(+). Its pathway is cofactor biosynthesis; riboflavin biosynthesis; riboflavin from 2-hydroxy-3-oxobutyl phosphate and 5-amino-6-(D-ribitylamino)uracil: step 1/2. Catalyzes the formation of 6,7-dimethyl-8-ribityllumazine by condensation of 5-amino-6-(D-ribitylamino)uracil with 3,4-dihydroxy-2-butanone 4-phosphate. This is the penultimate step in the biosynthesis of riboflavin. This chain is 6,7-dimethyl-8-ribityllumazine synthase, found in Thermococcus gammatolerans (strain DSM 15229 / JCM 11827 / EJ3).